The chain runs to 332 residues: Aspartate carbamoyltransferase catalytic subunit (332 aa).

Positions 1-20 (MPNTHDTKNNVSPSEYAKFD) are disordered. Carbamoyl phosphate is bound by residues R72 and T73. Residue K100 coordinates L-aspartate. 3 residues coordinate carbamoyl phosphate: R122, H152, and Q155. L-aspartate contacts are provided by R186 and R241. Carbamoyl phosphate contacts are provided by G282 and P283.

This sequence belongs to the aspartate/ornithine carbamoyltransferase superfamily. ATCase family. Heterododecamer (2C3:3R2) of six catalytic PyrB chains organized as two trimers (C3), and six regulatory PyrI chains organized as three dimers (R2).

It carries out the reaction carbamoyl phosphate + L-aspartate = N-carbamoyl-L-aspartate + phosphate + H(+). The protein operates within pyrimidine metabolism; UMP biosynthesis via de novo pathway; (S)-dihydroorotate from bicarbonate: step 2/3. Functionally, catalyzes the condensation of carbamoyl phosphate and aspartate to form carbamoyl aspartate and inorganic phosphate, the committed step in the de novo pyrimidine nucleotide biosynthesis pathway. This is Aspartate carbamoyltransferase catalytic subunit from Psychrobacter sp. (strain TAD1).